We begin with the raw amino-acid sequence, 116 residues long: Ribosome-binding factor A (116 aa).

It belongs to the RbfA family. Monomer. Binds 30S ribosomal subunits, but not 50S ribosomal subunits or 70S ribosomes.

The protein localises to the cytoplasm. Its function is as follows. One of several proteins that assist in the late maturation steps of the functional core of the 30S ribosomal subunit. Associates with free 30S ribosomal subunits (but not with 30S subunits that are part of 70S ribosomes or polysomes). Required for efficient processing of 16S rRNA. May interact with the 5'-terminal helix region of 16S rRNA. In Ureaplasma parvum serovar 3 (strain ATCC 27815 / 27 / NCTC 11736), this protein is Ribosome-binding factor A.